A 21-amino-acid polypeptide reads, in one-letter code: Dahlein-5.4 (21 aa).

Expressed by the skin dorsal glands.

Its subcellular location is the secreted. Its function is as follows. Has no antimicrobial activity. Strongly inhibits the formation of NO by neuronal nitric oxide synthase at micromolar concentrations. The chain is Dahlein-5.4 from Ranoidea dahlii (Dahl's aquatic frog).